Consider the following 127-residue polypeptide: Cyclin-dependent protein kinase inhibitor SIM (127 aa).

Positions 21-71 are disordered; it reads RANTNRDDDGGGCTTPTSSDHKIPPTTATTPPPPPQKPRPPSTPSSLGIRS. Pro residues predominate over residues 50–63; it reads TPPPPPQKPRPPST.

In terms of assembly, interacts with CDKA-1. Interacts with CYCD2-1, CYCD3-2 and CYCD4-1. Interacts with CDKB1-1. Interacts with CPR5. As to expression, expressed in the shoot apical meristem, leaf primordia and the elongation zone of the root.

It localises to the nucleus. Functionally, cyclin-dependent protein kinase (CDK) inhibitor that functions as a repressor of mitosis in the endoreduplication cell cycle. Inhibits the kinase activity of CYCD3-1/CDKA-1, CYCD2-1/CDKA-1 and CYCB1-1/CDKB1-1 complexes in a dose dependent manner. Cooperates with SMR1 and SMR2 to promote endoreplication during leaf development. Required for normal trichome endoreplicating cell cycles. Positive regulator of effector-triggered immunity (ETI). This is Cyclin-dependent protein kinase inhibitor SIM from Arabidopsis thaliana (Mouse-ear cress).